Here is a 258-residue protein sequence, read N- to C-terminus: DNA-directed RNA polymerase subunit Rpo3 (258 aa).

The protein belongs to the archaeal Rpo3/eukaryotic RPB3 RNA polymerase subunit family. In terms of assembly, part of the RNA polymerase complex.

It localises to the cytoplasm. It catalyses the reaction RNA(n) + a ribonucleoside 5'-triphosphate = RNA(n+1) + diphosphate. Functionally, DNA-dependent RNA polymerase (RNAP) catalyzes the transcription of DNA into RNA using the four ribonucleoside triphosphates as substrates. This is DNA-directed RNA polymerase subunit Rpo3 from Pyrobaculum calidifontis (strain DSM 21063 / JCM 11548 / VA1).